A 257-amino-acid polypeptide reads, in one-letter code: Acetylglutamate kinase (257 aa).

Substrate-binding positions include 40–41 (GG), Arg62, and Asn155.

It belongs to the acetylglutamate kinase family. ArgB subfamily.

Its subcellular location is the cytoplasm. The enzyme catalyses N-acetyl-L-glutamate + ATP = N-acetyl-L-glutamyl 5-phosphate + ADP. Its pathway is amino-acid biosynthesis; L-arginine biosynthesis; N(2)-acetyl-L-ornithine from L-glutamate: step 2/4. Catalyzes the ATP-dependent phosphorylation of N-acetyl-L-glutamate. The chain is Acetylglutamate kinase from Shouchella clausii (strain KSM-K16) (Alkalihalobacillus clausii).